Here is a 327-residue protein sequence, read N- to C-terminus: Flotillin-like protein FloA (327 aa).

A helical membrane pass occupies residues 7–27 (FLVPILIVILLLVFFSLVPVG).

The protein belongs to the flotillin-like FloA family. In terms of assembly, homooligomerizes.

It is found in the cell membrane. The protein resides in the membrane raft. Its function is as follows. Found in functional membrane microdomains (FMM) that may be equivalent to eukaryotic membrane rafts. FMMs are highly dynamic and increase in number as cells age. Flotillins are thought to be important factors in membrane fluidity. The chain is Flotillin-like protein FloA from Finegoldia magna (strain ATCC 29328 / DSM 20472 / WAL 2508) (Peptostreptococcus magnus).